The sequence spans 344 residues: Sorting nexin-16 (344 aa).

Residues 1–10 show a composition bias toward pro residues; the sequence is MATPYVPVPM. Residues 1-72 form a disordered region; the sequence is MATPYVPVPM…SASSMCGSPL (72 aa). Residues 14–26 are compositionally biased toward polar residues; it reads NSASSFTNNRNQR. Residues 27–40 show a composition bias toward low complexity; it reads SSSFGSVSTSSTSS. A compositionally biased stretch (polar residues) spans 52–68; sequence LKQTNVQDQMDSASSMC. Residues 105–218 enclose the PX domain; sequence DRPSTPTILG…EFLCLDDPPG (114 aa). Residues Arg-144, Thr-146, and Arg-184 each contribute to the a 1,2-diacyl-sn-glycero-3-phospho-(1D-myo-inositol-3-phosphate) site. At Ser-222 the chain carries Phosphoserine. The stretch at 223–278 forms a coiled coil; the sequence is LEESRAFCETLEETNYHLQRELLEKQKEVESLKKLLGEKQLHIDALETRIRTLSLE.

The protein belongs to the sorting nexin family. In terms of assembly, homooligomer. Interacts with EGFR.

The protein resides in the early endosome membrane. Its subcellular location is the late endosome membrane. It localises to the cytoplasm. The protein localises to the lysosome. In terms of biological role, may be involved in several stages of intracellular trafficking. Plays a role in protein transport from early to late endosomes. Plays a role in protein transport to the lysosome. Promotes degradation of EGFR after EGF signaling. In Mus musculus (Mouse), this protein is Sorting nexin-16 (Snx16).